We begin with the raw amino-acid sequence, 514 residues long: Pentatricopeptide repeat-containing protein At4g26800 (514 aa).

PPR repeat units follow at residues 122-156 (DLYTCNILVNCFCRCFQPSSALSYLGKMMKLGIEP), 157-191 (DIVTASSLVNGFCLSNSIKDAVYVAGQMEKMGIKR), 192-226 (DVVVDTILIDTLCKNRLVVPALEVLKRMKDRGISP), 227-261 (NVVTYSSLITGLCKSGRLADAERRLHEMDSKKINP), 262-296 (NVITFSALIDAYAKRGKLSKVDSVYKMMIQMSIDP), 297-331 (NVFTYSSLIYGLCMHNRVDEAIKMLDLMISKGCTP), 332-366 (NVVTYSTLANGFFKSSRVDDGIKLLDDMPQRGVAA), 367-401 (NTVSCNTLIKGYFQAGKIDLALGVFGYMTSNGLIP), 402-436 (NIRSYNIVLAGLFANGEVEKALSRFEHMQKTRNDL), 437-471 (DIITYTIMIHGMCKACMVKEAYDLFYKLKFKRVEP), and 472-510 (DFKAYTIMIAELNRAGMRTEADALNRFYQKHVRQNESAP).

Belongs to the PPR family. P subfamily.

The sequence is that of Pentatricopeptide repeat-containing protein At4g26800 from Arabidopsis thaliana (Mouse-ear cress).